Here is a 637-residue protein sequence, read N- to C-terminus: tRNA uridine 5-carboxymethylaminomethyl modification enzyme MnmG (637 aa).

FAD is bound at residue 14–19 (GAGHAG). 279-293 (GPRYCPSIEDKVVRF) contributes to the NAD(+) binding site.

The protein belongs to the MnmG family. As to quaternary structure, homodimer. Heterotetramer of two MnmE and two MnmG subunits. The cofactor is FAD.

The protein resides in the cytoplasm. Functionally, NAD-binding protein involved in the addition of a carboxymethylaminomethyl (cmnm) group at the wobble position (U34) of certain tRNAs, forming tRNA-cmnm(5)s(2)U34. The chain is tRNA uridine 5-carboxymethylaminomethyl modification enzyme MnmG from Desulfitobacterium hafniense (strain Y51).